The primary structure comprises 827 residues: Putative transcriptional regulatory protein C16G5.16 (827 aa).

A DNA-binding region (zn(2)-C6 fungal-type) is located at residues Cys16–Cys42. Disordered stretches follow at residues Leu80 to Asp114, Thr158 to Pro193, and Gln794 to Glu827. Over residues Lys102 to Ser112 the composition is skewed to basic and acidic residues. A Phosphoserine modification is found at Ser112. 2 stretches are compositionally biased toward low complexity: residues Val159–Pro179 and Ser811–Glu827.

It belongs to the ASG1 family.

It localises to the cytoplasm. It is found in the nucleus. The sequence is that of Putative transcriptional regulatory protein C16G5.16 from Schizosaccharomyces pombe (strain 972 / ATCC 24843) (Fission yeast).